Consider the following 542-residue polypeptide: Chitinase 1 (542 aa).

The GH18 domain maps to 68–506; the sequence is FNVLCYFTDW…NAAHEGLKRR (439 aa). Chitin-binding positions include 186-187 and 213-216; these read QE and GGWS. Glutamate 256 acts as the Proton donor in catalysis. Chitin contacts are provided by residues tyrosine 257, 323-326, and tryptophan 486; that span reads MTYD.

The protein belongs to the glycosyl hydrolase 18 family. As to quaternary structure, semipurified toxin complex consists of at least YenA1-YenA2-YenB-YenC1-YenC2-Chi1-Chi2. The Yen-TC:K9 subcomplex is about 26 nm tall and 22 nm in diameter with 5-fold symmetry and 5 copies of YenA1, YenA2, Chi1 and Chi2; the chitinase subunits may be solvent accessible on the exterior the complex. The Yen-TC:K9 subcomplex has no insecticidal activity. The native complex with additional YenB, YenC1 and YenC2 subunits is 16 nm taller and is insecticidal; the toxicity-conferring subunits are present at about 1 copy each.

The protein resides in the secreted. The enzyme catalyses Random endo-hydrolysis of N-acetyl-beta-D-glucosaminide (1-&gt;4)-beta-linkages in chitin and chitodextrins.. With respect to regulation, toxin complex is secreted when grown at 25 degrees Celsius or less; at higher temperatures the proteins are present intracellularly but not secreted. Functionally, part of an orally active toxin complex (TC) with strong insecticidal effects on larvae of the Coleoptera Costelytra zealandica, Acrossidius tasmania and Adoryphorus couloni and some Lepidoptera larvae. The TC has an endochitinase activity. This subunit might aid infection by degradation of the larval peritrophic membrane. This is Chitinase 1 from Yersinia entomophaga.